A 299-amino-acid polypeptide reads, in one-letter code: Taste receptor type 2 member 19 (299 aa).

Residue methionine 1 is a topological domain, extracellular. The chain crosses the membrane as a helical span at residues 2–22 (MCFLLIILSILVVFAFVLGNF). Residues 23–55 (SNGFIALVNVIDWVNTRKISSADQILTALVVSR) lie on the Cytoplasmic side of the membrane. The helical transmembrane segment at 56-76 (IGLLWVMLFLWYATVFNSALY) threads the bilayer. Over 77–87 (GLEVRIVASNA) the chain is Extracellular. A helical membrane pass occupies residues 88 to 108 (WAVMNHFSIWLAASLSIFCLL). At 109–127 (KIANFSNLIFLHLKKRIKS) the chain is on the cytoplasmic side. A helical membrane pass occupies residues 128 to 148 (VVLVILLGPLVFLICNLAVIT). Over 149 to 181 (MDERVWTKEYEGNVTWKIKLRNAIQLSSLTVTT) the chain is Extracellular. Asparagine 161 is a glycosylation site (N-linked (GlcNAc...) asparagine). Residues 182–202 (LANLIPFTLSLICFLLLICSL) form a helical membrane-spanning segment. The Cytoplasmic portion of the chain corresponds to 203-226 (CKHLKKMRLHSKGSQDPSTKVHIK). The helical transmembrane segment at 227-247 (ALQTVTSFLMLFAIYFLCIIT) threads the bilayer. Over 248 to 259 (STWNLRTQQSKL) the chain is Extracellular. A helical membrane pass occupies residues 260–280 (VLLLCQTVAIMYPSFHSFILI). The Cytoplasmic portion of the chain corresponds to 281–299 (MGSRKLKQTFLSVLWQMTR).

The protein belongs to the G-protein coupled receptor T2R family.

The protein localises to the membrane. In terms of biological role, receptor that may play a role in the perception of bitterness and is gustducin-linked. May play a role in sensing the chemical composition of the gastrointestinal content. The activity of this receptor may stimulate alpha gustducin, mediate PLC-beta-2 activation and lead to the gating of TRPM5. The sequence is that of Taste receptor type 2 member 19 (TAS2R19) from Pan paniscus (Pygmy chimpanzee).